Here is a 248-residue protein sequence, read N- to C-terminus: Pyridoxine 5'-phosphate synthase (248 aa).

3-amino-2-oxopropyl phosphate is bound at residue Asn12. Position 14 to 15 (14 to 15 (DH)) interacts with 1-deoxy-D-xylulose 5-phosphate. Residue Arg23 coordinates 3-amino-2-oxopropyl phosphate. Catalysis depends on His48, which acts as the Proton acceptor. Arg50 and His55 together coordinate 1-deoxy-D-xylulose 5-phosphate. Residue Glu75 is the Proton acceptor of the active site. Position 105 (Thr105) interacts with 1-deoxy-D-xylulose 5-phosphate. The active-site Proton donor is the His196. Residues Gly197 and 218–219 (GH) contribute to the 3-amino-2-oxopropyl phosphate site.

It belongs to the PNP synthase family. Homooctamer; tetramer of dimers.

The protein resides in the cytoplasm. The catalysed reaction is 3-amino-2-oxopropyl phosphate + 1-deoxy-D-xylulose 5-phosphate = pyridoxine 5'-phosphate + phosphate + 2 H2O + H(+). It participates in cofactor biosynthesis; pyridoxine 5'-phosphate biosynthesis; pyridoxine 5'-phosphate from D-erythrose 4-phosphate: step 5/5. Catalyzes the complicated ring closure reaction between the two acyclic compounds 1-deoxy-D-xylulose-5-phosphate (DXP) and 3-amino-2-oxopropyl phosphate (1-amino-acetone-3-phosphate or AAP) to form pyridoxine 5'-phosphate (PNP) and inorganic phosphate. In Pseudomonas fluorescens (strain ATCC BAA-477 / NRRL B-23932 / Pf-5), this protein is Pyridoxine 5'-phosphate synthase.